Consider the following 385-residue polypeptide: Deoxyguanosinetriphosphate triphosphohydrolase-like protein (385 aa).

Positions 1–14 (MTEGVEGRSQERSD) are enriched in basic and acidic residues. The tract at residues 1-23 (MTEGVEGRSQERSDLAGFAARSA) is disordered. In terms of domain architecture, HD spans 75–204 (RLTHSLEVAQ…INYADEIAYN (130 aa)).

Belongs to the dGTPase family. Type 2 subfamily.

The polypeptide is Deoxyguanosinetriphosphate triphosphohydrolase-like protein (Geobacter metallireducens (strain ATCC 53774 / DSM 7210 / GS-15)).